The following is a 481-amino-acid chain: Cobyric acid synthase (481 aa).

Residues 244 to 431 enclose the GATase cobBQ-type domain; it reads VLRVVIPVLP…LHGLFDAPEA (188 aa). Cysteine 325 functions as the Nucleophile in the catalytic mechanism. The active site involves histidine 423.

The protein belongs to the CobB/CobQ family. CobQ subfamily.

Its pathway is cofactor biosynthesis; adenosylcobalamin biosynthesis. In terms of biological role, catalyzes amidations at positions B, D, E, and G on adenosylcobyrinic A,C-diamide. NH(2) groups are provided by glutamine, and one molecule of ATP is hydrogenolyzed for each amidation. This Ralstonia nicotianae (strain ATCC BAA-1114 / GMI1000) (Ralstonia solanacearum) protein is Cobyric acid synthase.